Consider the following 152-residue polypeptide: Orientotoxin-1 (152 aa).

As to expression, expressed by the venom gland.

It localises to the secreted. The enzyme catalyses a 1-acyl-sn-glycero-3-phosphocholine + H2O = sn-glycerol 3-phosphocholine + a fatty acid + H(+). Its function is as follows. Neurotoxin of presynaptic effect which degrades lysophospholipids. The protein is Orientotoxin-1 of Vespa orientalis (Oriental hornet).